The chain runs to 78 residues: DNA import protein CedA1 (78 aa).

A run of 2 helical transmembrane segments spans residues serine 12–leucine 32 and alanine 53–isoleucine 73.

In terms of assembly, forms a complex composed of CedA, CedA1 and CedA2.

Its subcellular location is the cell membrane. Functionally, part of the Ced system, which is involved in DNA import. The protein is DNA import protein CedA1 of Sulfolobus acidocaldarius (strain ATCC 33909 / DSM 639 / JCM 8929 / NBRC 15157 / NCIMB 11770).